A 707-amino-acid polypeptide reads, in one-letter code: Acyl-CoA ligase 891, peroxisomal (707 aa).

259-270 (INYTSGTTGPPK) lines the ATP pocket. Positions 525 to 549 (DGWFRTGDVCTVDAQGRFIIIDRRK) are fatty acid-binding. The Peroxisome targeting signal signature appears at 705 to 707 (AKL).

Belongs to the ATP-dependent AMP-binding enzyme family.

It localises to the peroxisome matrix. It carries out the reaction (4E,8E)-10-(4-hydroxy-6-methoxy-7-methyl-3-oxo-1,3-dihydro-2-benzofuran-5-yl)-4,8-dimethyldeca-4,8-dienoate + ATP + CoA = (4E,8E)-10-(4-hydroxy-6-methoxy-7-methyl-3-oxo-1,3-dihydro-2-benzofuran-5-yl)-4,8-dimethyldeca-4,8-dienoyl-CoA + AMP + diphosphate. It participates in secondary metabolite biosynthesis; terpenoid biosynthesis. Its function is as follows. Acyl-CoA ligase involved in the biosynthesis of mycophenolic acid (MPA), the first isolated antibiotic natural product in the world obtained from a culture of Penicillium brevicompactum in 1893. The peroxisomal acyl-CoA ligase 891 converts the intermediate MFDHMP-3C into MFDHMP-3C-CoA which impairs its diffusion from the peroxisome. The first step of the pathway is the synthesis of 5-methylorsellinic acid (5MOA) by the cytosolic polyketide synthase mpaC. 5MOA is then converted to the phthalide compound 5,7-dihydroxy-4,6-dimethylphthalide (DHMP) by the endoplasmic reticulum-bound cytochrome P450 monooxygenase mpaDE. MpaDE first catalyzes hydroxylation of 5-MOA to 4,6-dihydroxy-2-(hydroxymethyl)-3-methylbenzoic acid (DHMB). MpaDE then acts as a lactone synthase that catalyzes the ring closure to convert DHMB into DHMP. The next step is the prenylation of DHMP by the Golgi apparatus-associated prenyltransferase mpaA to yield farnesyl-DHMP (FDHMP). The ER-bound oxygenase mpaB then mediates the oxidative cleavage the C19-C20 double bond in FDHMP to yield FDHMP-3C via a mycophenolic aldehyde intermediate. The O-methyltransferase mpaG catalyzes the methylation of FDHMP-3C to yield MFDHMP-3C. After the cytosolic methylation of FDHMP-3C, MFDHMP-3C enters into peroxisomes probably via free diffusion due to its low molecular weight. Upon a peroxisomal CoA ligation reaction, catalyzed by a beta-oxidation component enzyme acyl-CoA ligase ACL891, MFDHMP-3C-CoA would then be restricted to peroxisomes for the following beta-oxidation pathway steps. The peroxisomal beta-oxidation machinery than converts MFDHMP-3C-CoA into MPA_CoA, via a beta-oxidation chain-shortening process. Finally mpaH acts as a peroxisomal acyl-CoA hydrolase with high substrate specificity toward MPA-CoA to release the final product MPA. In Penicillium brevicompactum, this protein is Acyl-CoA ligase 891, peroxisomal.